The chain runs to 142 residues: Dromaiocalcin-1 (142 aa).

Cystine bridges form between cysteine 13–cysteine 24, cysteine 41–cysteine 138, and cysteine 113–cysteine 130. One can recognise a C-type lectin domain in the interval phenylalanine 20–lysine 139.

The protein localises to the secreted. It is found in the extracellular space. It localises to the extracellular matrix. The protein is Dromaiocalcin-1 of Dromaius novaehollandiae (Emu).